The chain runs to 524 residues: Probable endopeptidase p60 (524 aa).

Positions 1–27 (MNMKKATIAATAGIAVTAFAAPTIASA) are cleaved as a signal peptide. Residues 28 to 71 (STVVVEAGDTLWGIAQSKGTTVDALKKANNLTSDKIVPGQKLQV) form the LysM 1 domain. Positions 78–142 (KTEKSVSATW…VNGKYLGDAV (65 aa)) constitute an SH3b domain. Positions 150–188 (QEVKQETTKQTAPAAETKTEVKQSTPAPTAPKAAETKTA) are disordered. Low complexity predominate over residues 174–188 (TPAPTAPKAAETKTA). In terms of domain architecture, LysM 2 spans 196–239 (TTHTVKSGDTIWALSVKYGASVQDLMSWNNLSSSSIYVGQKIAV). The segment covering 272–299 (NTNTTVKKEVTTQTQTNTTKAPAQAAKP) has biased composition (low complexity). Residues 272 to 313 (NTNTTVKKEVTTQTQTNTTKAPAQAAKPAPAPAPAPTVNTNA) form a disordered region. One can recognise a LysM 3 domain in the interval 314 to 357 (STYTVKSGDSLSKIANTFGTSVSKIKALNNLTSDNLQVGTVLKV). The disordered stretch occupies residues 360–408 (TVPTTNTNNNSNTTAPTTNTSNNNTSSNTSTPSKNTNTNTNQGSSNSAS). Over residues 362–408 (PTTNTNNNSNTTAPTTNTSNNNTSSNTSTPSKNTNTNTNQGSSNSAS) the composition is skewed to low complexity. In terms of domain architecture, NlpC/P60 spans 406–524 (SASASALIAE…GKYLVGFGRV (119 aa)). Cys-436 acts as the Nucleophile in catalysis. His-486 serves as the catalytic Proton acceptor. Asn-498 is a catalytic residue.

Belongs to the peptidase C40 family.

Its function is as follows. This major extracellular protein may be involved in the invasion of non-professional phagocytic cells by Listeria. This is Probable endopeptidase p60 (iap) from Listeria welshimeri.